The primary structure comprises 259 residues: Ribosomal RNA small subunit methyltransferase A (259 aa).

6 residues coordinate S-adenosyl-L-methionine: asparagine 12, leucine 14, glycine 39, glutamate 60, aspartate 84, and asparagine 102.

It belongs to the class I-like SAM-binding methyltransferase superfamily. rRNA adenine N(6)-methyltransferase family. RsmA subfamily.

The protein localises to the cytoplasm. The enzyme catalyses adenosine(1518)/adenosine(1519) in 16S rRNA + 4 S-adenosyl-L-methionine = N(6)-dimethyladenosine(1518)/N(6)-dimethyladenosine(1519) in 16S rRNA + 4 S-adenosyl-L-homocysteine + 4 H(+). In terms of biological role, specifically dimethylates two adjacent adenosines (A1518 and A1519) in the loop of a conserved hairpin near the 3'-end of 16S rRNA in the 30S particle. May play a critical role in biogenesis of 30S subunits. The sequence is that of Ribosomal RNA small subunit methyltransferase A from Nitrosospira multiformis (strain ATCC 25196 / NCIMB 11849 / C 71).